The chain runs to 162 residues: Peptidyl-prolyl cis-trans isomerase (162 aa).

A PPIase cyclophilin-type domain is found at 5–161 (FFDVIANGQP…ARIVIDKCGT (157 aa)).

Belongs to the cyclophilin-type PPIase family. PPIase A subfamily.

The protein localises to the cytoplasm. It carries out the reaction [protein]-peptidylproline (omega=180) = [protein]-peptidylproline (omega=0). With respect to regulation, binds cyclosporin A (CsA). CsA mediates some of its effects via an inhibitory action on PPIase. Its function is as follows. PPIases accelerate the folding of proteins. It catalyzes the cis-trans isomerization of proline imidic peptide bonds in oligopeptides. This Schizosaccharomyces pombe (strain 972 / ATCC 24843) (Fission yeast) protein is Peptidyl-prolyl cis-trans isomerase (ppi1).